Here is a 204-residue protein sequence, read N- to C-terminus: Holliday junction branch migration complex subunit RuvA (204 aa).

The interval 1 to 64 is domain I; it reads MFAFLRGELV…EDLQQLFGFL (64 aa). The segment at 65 to 143 is domain II; that stretch reads DEEELQLFRL…KIQPTSSAKA (79 aa). The segment at 144–151 is flexible linker; the sequence is GAPSAVLS. The tract at residues 151–204 is domain III; sequence SATQLIDDAVAALTTLGFPKASAQKAVSKVLETTPGLSVEELVRTSLAAMHNNL.

The protein belongs to the RuvA family. As to quaternary structure, homotetramer. Forms an RuvA(8)-RuvB(12)-Holliday junction (HJ) complex. HJ DNA is sandwiched between 2 RuvA tetramers; dsDNA enters through RuvA and exits via RuvB. An RuvB hexamer assembles on each DNA strand where it exits the tetramer. Each RuvB hexamer is contacted by two RuvA subunits (via domain III) on 2 adjacent RuvB subunits; this complex drives branch migration. In the full resolvosome a probable DNA-RuvA(4)-RuvB(12)-RuvC(2) complex forms which resolves the HJ.

The protein resides in the cytoplasm. The RuvA-RuvB-RuvC complex processes Holliday junction (HJ) DNA during genetic recombination and DNA repair, while the RuvA-RuvB complex plays an important role in the rescue of blocked DNA replication forks via replication fork reversal (RFR). RuvA specifically binds to HJ cruciform DNA, conferring on it an open structure. The RuvB hexamer acts as an ATP-dependent pump, pulling dsDNA into and through the RuvAB complex. HJ branch migration allows RuvC to scan DNA until it finds its consensus sequence, where it cleaves and resolves the cruciform DNA. The protein is Holliday junction branch migration complex subunit RuvA of Chlorobaculum parvum (strain DSM 263 / NCIMB 8327) (Chlorobium vibrioforme subsp. thiosulfatophilum).